We begin with the raw amino-acid sequence, 290 residues long: 4-diphosphocytidyl-2-C-methyl-D-erythritol kinase (290 aa).

Residue lysine 8 is part of the active site. 89–99 (PIGAGVGGGSS) contacts ATP. Residue aspartate 131 is part of the active site.

The protein belongs to the GHMP kinase family. IspE subfamily.

It catalyses the reaction 4-CDP-2-C-methyl-D-erythritol + ATP = 4-CDP-2-C-methyl-D-erythritol 2-phosphate + ADP + H(+). It participates in isoprenoid biosynthesis; isopentenyl diphosphate biosynthesis via DXP pathway; isopentenyl diphosphate from 1-deoxy-D-xylulose 5-phosphate: step 3/6. Its function is as follows. Catalyzes the phosphorylation of the position 2 hydroxy group of 4-diphosphocytidyl-2C-methyl-D-erythritol. In Chlamydia felis (strain Fe/C-56) (Chlamydophila felis), this protein is 4-diphosphocytidyl-2-C-methyl-D-erythritol kinase.